Here is a 341-residue protein sequence, read N- to C-terminus: Ectoine-binding periplasmic protein TeaA (341 aa).

Residues 1–25 (MKAYKLLTTASIGALMLGMSTAAYS) form the signal peptide. Residues glutamate 34, arginine 169, asparagine 209, tryptophan 213, and phenylalanine 234 each coordinate L-ectoine.

Belongs to the bacterial solute-binding protein 7 family. In terms of assembly, monomer. The complex comprises the extracytoplasmic solute receptor protein TeaA, and the two transmembrane proteins TeaB and TeaC.

It localises to the periplasm. Functionally, part of the tripartite ATP-independent periplasmic (TRAP) transport system TeaABC involved in the uptake of ectoine and hydroxyectoine in response to osmotic upshock. Probably functions as a recovery system for synthesized ectoine that leaks out of the cell. Binds ectoine with high affinity. Affinity for hydroxyectoine is approximately 20-fold lower. This chain is Ectoine-binding periplasmic protein TeaA (teaA), found in Halomonas elongata (strain ATCC 33173 / DSM 2581 / NBRC 15536 / NCIMB 2198 / 1H9).